The sequence spans 522 residues: Gypsy retrotransposon integrase-like protein 1 (522 aa).

An Integrase catalytic domain is found at 135-292; the sequence is KVENPWSLVT…TPYFQMFSRN (158 aa). S502 carries the phosphoserine modification.

This is Gypsy retrotransposon integrase-like protein 1 (GIN1) from Pongo abelii (Sumatran orangutan).